A 289-amino-acid polypeptide reads, in one-letter code: Bidirectional sugar transporter SWEET11 (289 aa).

Residues 1–9 are Extracellular-facing; it reads MSLFNTENT. The chain crosses the membrane as a helical span at residues 10–30; it reads WAFVFGLLGNLISFAVFLSPV. A MtN3/slv 1 domain is found at 12 to 98; it reads FVFGLLGNLI…SMFLAYAPKP (87 aa). Topologically, residues 31-43 are cytoplasmic; the sequence is PTFYRIWKKKTTE. A helical membrane pass occupies residues 44–64; the sequence is GFQSIPYVVALFSATLWLYYA. Residues 65-70 lie on the Extracellular side of the membrane; the sequence is TQKKDV. The helical transmembrane segment at 71–91 threads the bilayer; the sequence is FLLVTINAFGCFIETIYISMF. Residues 92-105 lie on the Cytoplasmic side of the membrane; the sequence is LAYAPKPARMLTVK. The chain crosses the membrane as a helical span at residues 106-126; it reads MLLLMNFGGFCAILLLCQFLV. At 127 to 133 the chain is on the extracellular side; sequence KGATRAK. A helical transmembrane segment spans residues 134 to 154; that stretch reads IIGGICVGFSVCVFAAPLSII. Positions 134 to 218 constitute a MtN3/slv 2 domain; it reads IIGGICVGFS…ILYVVYKYCK (85 aa). Residues 155–167 are Cytoplasmic-facing; that stretch reads RTVIKTRSVEYMP. Residues 168–188 form a helical membrane-spanning segment; that stretch reads FSLSLTLTISAVIWLLYGLAL. Over 189 to 192 the chain is Extracellular; that stretch reads KDIY. A helical membrane pass occupies residues 193-213; sequence VAFPNVLGFALGALQMILYVV. Over 214-289 the chain is Cytoplasmic; the sequence is YKYCKTSPHL…GKQSSSAAAT (76 aa). Positions 266-289 are disordered; sequence DRRAEIEDGQTPKHGKQSSSAAAT. Residue T276 is modified to Phosphothreonine.

Belongs to the SWEET sugar transporter family. As to quaternary structure, forms homooligomers and heterooligomers with SWEET1, SWEET3, SWEET5, SWEET6, SWEET7, SWEET8, SWEET9, SWEET12, SWEET13, SWEET15 and SWEET17. Expressed in leaves, especially in phloem. Expressed in developing seeds.

It localises to the cell membrane. In terms of biological role, mediates both low-affinity uptake and efflux of sugar across the plasma membrane. Involved in phloem loading by mediating export from parenchyma cells feeding H(+)-coupled import into the sieve element/companion cell complex, thus contributing to the sucrose migration from sites of synthesis in the mesophyll to the phloem. Contributes to seed filling by triggering sucrose efflux involved in the transfer of sugars from seed coat to embryos. The sequence is that of Bidirectional sugar transporter SWEET11 from Arabidopsis thaliana (Mouse-ear cress).